Here is a 487-residue protein sequence, read N- to C-terminus: Photosystem II CP43 reaction center protein (487 aa).

Positions 1–28 (MKVFVLGWLLKINLMKTLYSQRRFYHVE) are excised as a propeptide. The next 5 membrane-spanning stretches (helical) occupy residues 83–107 (LFEV…PHLA), 148–169 (LIGP…RDKN), 192–214 (KSLF…RFVS), 269–289 (KPFA…LSYS), and 305–326 (WYNN…ASQA). Position 381 (Glu381) interacts with [CaMn4O5] cluster. Residues 461–485 (RARAAAAGFEKGINRENEPVLSMRP) traverse the membrane as a helical segment.

This sequence belongs to the PsbB/PsbC family. PsbC subfamily. PSII is composed of 1 copy each of membrane proteins PsbA, PsbB, PsbC, PsbD, PsbE, PsbF, PsbH, PsbI, PsbJ, PsbK, PsbL, PsbM, PsbT, PsbX, PsbY, PsbZ, Psb30/Ycf12, at least 3 peripheral proteins of the oxygen-evolving complex and a large number of cofactors. It forms dimeric complexes. It depends on Binds multiple chlorophylls and provides some of the ligands for the Ca-4Mn-5O cluster of the oxygen-evolving complex. It may also provide a ligand for a Cl- that is required for oxygen evolution. PSII binds additional chlorophylls, carotenoids and specific lipids. as a cofactor.

Its subcellular location is the plastid. It localises to the chloroplast thylakoid membrane. Functionally, one of the components of the core complex of photosystem II (PSII). It binds chlorophyll and helps catalyze the primary light-induced photochemical processes of PSII. PSII is a light-driven water:plastoquinone oxidoreductase, using light energy to abstract electrons from H(2)O, generating O(2) and a proton gradient subsequently used for ATP formation. This chain is Photosystem II CP43 reaction center protein, found in Porphyra purpurea (Red seaweed).